The primary structure comprises 394 residues: NAC domain-containing protein 26 (394 aa).

Residues 7-156 (VPPGFRFHPT…GWVVCRVFKK (150 aa)) enclose the NAC domain. The DNA-binding element occupies 107–162 (IGMRKTLVFYKGRAPNGQKSDWIMHEYRLETSENGTPQEEGWVVCRVFKKKLAATV).

The protein belongs to the plant vascular related NAC-domain protein family. Interacts with NAC083/VNI2. Detected in root vessels of protoxylems, outermost metaxylems, inner metaxylems, shoots and hypocotyls. Expressed in roots, hypocotyls, cotyledons and leaves. Expressed in developing xylems. Specifically expressed in vessels in the secondary xylem of the root-hypocotyl region, and in vessels but not in interfascicular fibers in stems.

It localises to the nucleus. Transcription activator that binds to the secondary wall NAC binding element (SNBE), 5'-(T/A)NN(C/T)(T/C/G)TNNNNNNNA(A/C)GN(A/C/T)(A/T)-3', in the promoter of target genes. Involved in xylem formation by promoting the expression of secondary wall-associated transcription factors and of genes involved in secondary wall biosynthesis and programmed cell death, genes driven by the secondary wall NAC binding element (SNBE). Triggers thickening of secondary walls. This is NAC domain-containing protein 26 from Arabidopsis thaliana (Mouse-ear cress).